A 119-amino-acid chain; its full sequence is Small ribosomal subunit protein bS16 (119 aa).

This sequence belongs to the bacterial ribosomal protein bS16 family.

The polypeptide is Small ribosomal subunit protein bS16 (Chlamydia caviae (strain ATCC VR-813 / DSM 19441 / 03DC25 / GPIC) (Chlamydophila caviae)).